The chain runs to 91 residues: Transcription factor ILI3 (91 aa).

A bHLH domain is found at Ser-3–Leu-58.

It belongs to the bHLH protein family.

Functionally, atypical and probable non DNA-binding bHLH transcription that integrates multiple signaling pathways to regulate cell elongation and plant development. In Oryza sativa subsp. indica (Rice), this protein is Transcription factor ILI3 (ILI3).